A 463-amino-acid polypeptide reads, in one-letter code: uncharacterized protein (463 aa).

Belongs to the mycobacterial PPE family.

This is an uncharacterized protein from Mycobacterium tuberculosis (strain ATCC 25618 / H37Rv).